The primary structure comprises 249 residues: Nicotinamide/nicotinic acid mononucleotide adenylyltransferase (249 aa).

2 residues coordinate NAD(+): Ser34 and Phe35. ATP contacts are provided by His42 and Lys75. The NAD(+) site is built by Thr112, Gly141, Asp143, Trp154, Arg173, and Asn204. 209-210 (SR) provides a ligand contact to ATP.

The protein belongs to the eukaryotic NMN adenylyltransferase family. Requires a divalent metal cation as cofactor.

The enzyme catalyses beta-nicotinamide D-ribonucleotide + ATP + H(+) = diphosphate + NAD(+). The catalysed reaction is nicotinate beta-D-ribonucleotide + ATP + H(+) = deamido-NAD(+) + diphosphate. It functions in the pathway cofactor biosynthesis; NAD(+) biosynthesis; deamido-NAD(+) from nicotinate D-ribonucleotide: step 1/1. The protein operates within cofactor biosynthesis; NAD(+) biosynthesis; NAD(+) from nicotinamide D-ribonucleotide: step 1/1. Functionally, catalyzes the formation of NAD(+) from nicotinamide mononucleotide (NMN) and ATP. Can also use the deamidated form; nicotinic acid mononucleotide (NaMN) as substrate. The sequence is that of Nicotinamide/nicotinic acid mononucleotide adenylyltransferase from Oryza sativa subsp. japonica (Rice).